A 969-amino-acid chain; its full sequence is Probable Rho-type GTPase-activating protein 3 (969 aa).

2 consecutive LIM zinc-binding domains span residues 17 to 81 (TVCF…CTAC) and 76 to 135 (HTCT…RHPS). Disordered regions lie at residues 170–223 (IEIM…ADSL), 348–459 (ATSP…VEEL), and 613–646 (TSSK…SPNL). Polar residues predominate over residues 193–202 (ETPTNMSQAE). Low complexity-rich tracts occupy residues 212–223 (DSNLASNSADSL) and 350–361 (SPFRPFSPSYRS). 2 stretches are compositionally biased toward polar residues: residues 369 to 392 (TRSP…SFAQ) and 418 to 432 (LSET…SLGS). Positions 450 to 459 (SERDSDVEEL) are enriched in basic and acidic residues. Residues 613 to 623 (TSSKNTTSSIN) show a composition bias toward low complexity. Residues 624–637 (PLTAVSSNSGQSSG) show a composition bias toward polar residues. The Phorbol-ester/DAG-type zinc finger occupies 697–744 (DHVFHVNAIFKPSRCYICSESVWGSELRCFHCSISCHSRCLKRLFAES). Residues 780-966 (RSLENQLKIE…FMLDNVDKIL (187 aa)) form the Rho-GAP domain.

In terms of assembly, interacts with dil1.

It localises to the cell tip. In terms of biological role, GTPase-activating protein for Rho-type proteins. The sequence is that of Probable Rho-type GTPase-activating protein 3 (rga3) from Schizosaccharomyces pombe (strain 972 / ATCC 24843) (Fission yeast).